Here is a 482-residue protein sequence, read N- to C-terminus: 6-phosphogluconate dehydrogenase, decarboxylating (482 aa).

Residues Gly-17 to Gly-22, Asn-40 to Ser-42, Val-82 to Ala-84, and Asn-110 each bind NADP(+). Substrate is bound by residues Asn-110 and Ser-136–Gly-138. Catalysis depends on Lys-193, which acts as the Proton acceptor. A substrate-binding site is contributed by His-196–Asn-197. Catalysis depends on Glu-200, which acts as the Proton donor. Residues Tyr-201, Lys-272, Arg-299, Arg-457, and His-463 each contribute to the substrate site.

Belongs to the 6-phosphogluconate dehydrogenase family. Homodimer.

The enzyme catalyses 6-phospho-D-gluconate + NADP(+) = D-ribulose 5-phosphate + CO2 + NADPH. Its pathway is carbohydrate degradation; pentose phosphate pathway; D-ribulose 5-phosphate from D-glucose 6-phosphate (oxidative stage): step 3/3. Functionally, catalyzes the oxidative decarboxylation of 6-phosphogluconate to ribulose 5-phosphate and CO(2), with concomitant reduction of NADP to NADPH. The chain is 6-phosphogluconate dehydrogenase, decarboxylating (gnd) from Synechocystis sp. (strain ATCC 27184 / PCC 6803 / Kazusa).